The following is a 366-amino-acid chain: Aminomethyltransferase (366 aa).

It belongs to the GcvT family. In terms of assembly, the glycine cleavage system is composed of four proteins: P, T, L and H.

It carries out the reaction N(6)-[(R)-S(8)-aminomethyldihydrolipoyl]-L-lysyl-[protein] + (6S)-5,6,7,8-tetrahydrofolate = N(6)-[(R)-dihydrolipoyl]-L-lysyl-[protein] + (6R)-5,10-methylene-5,6,7,8-tetrahydrofolate + NH4(+). Functionally, the glycine cleavage system catalyzes the degradation of glycine. The protein is Aminomethyltransferase of Bordetella bronchiseptica (strain ATCC BAA-588 / NCTC 13252 / RB50) (Alcaligenes bronchisepticus).